The chain runs to 126 residues: UPF0332 protein glr0978 (126 aa).

The protein belongs to the UPF0332 family.

This is UPF0332 protein glr0978 from Gloeobacter violaceus (strain ATCC 29082 / PCC 7421).